The primary structure comprises 439 residues: Glutamine synthetase (439 aa).

Positions 13–98 (ENVRFIRLQF…VICDVYTPDG (86 aa)) constitute a GS beta-grasp domain. The GS catalytic domain occupies 105–439 (PRYRLRRMME…NWELQRYLYL (335 aa)). Residues E128 and E130 each contribute to the Mg(2+) site. Position 180 (E180) interacts with ATP. 2 residues coordinate Mg(2+): E185 and E192. Residues 236 to 237 (NG) and G237 each bind L-glutamate. H241 contributes to the Mg(2+) binding site. ATP is bound by residues 243–245 (HMS) and S245. 3 residues coordinate L-glutamate: R294, E300, and R312. ATP contacts are provided by R312, R317, and K324. E329 serves as a coordination point for Mg(2+). R331 lines the L-glutamate pocket.

This sequence belongs to the glutamine synthetase family. As to quaternary structure, oligomer of 12 subunits arranged in the form of two hexagons. In its feedback-inhibited form, interacts with TnrA in order to block its DNA-binding activity. Requires Mg(2+) as cofactor.

It localises to the cytoplasm. It catalyses the reaction L-glutamate + NH4(+) + ATP = L-glutamine + ADP + phosphate + H(+). Its activity is regulated as follows. Inhibited by glutamine. Functionally, glutamine synthetase (GS) is an unusual multitasking protein that functions as an enzyme, a transcription coregulator, and a chaperone in ammonium assimilation and in the regulation of genes involved in nitrogen metabolism. It catalyzes the ATP-dependent biosynthesis of glutamine from glutamate and ammonia. Feedback-inhibited GlnA also interacts with and regulates the activity of the transcriptional regulator TnrA. During nitrogen limitation, TnrA is in its DNA-binding active state and turns on the transcription of genes required for nitrogen assimilation. Under conditions of nitrogen excess, feedback-inhibited GlnA forms a stable complex with TnrA, which inhibits its DNA-binding activity. In contrast, feedback-inhibited GlnA acts as a chaperone to stabilize the DNA-binding activity of GlnR, which represses the transcription of nitrogen assimilation genes. This chain is Glutamine synthetase, found in Thermotoga maritima (strain ATCC 43589 / DSM 3109 / JCM 10099 / NBRC 100826 / MSB8).